A 209-amino-acid chain; its full sequence is Small ribosomal subunit protein uS4 (209 aa).

In terms of domain architecture, S4 RNA-binding spans 99 to 160 (RRLDNVVYRL…GSKEMTLLGQ (62 aa)).

Belongs to the universal ribosomal protein uS4 family. Part of the 30S ribosomal subunit. Contacts protein S5. The interaction surface between S4 and S5 is involved in control of translational fidelity.

Its function is as follows. One of the primary rRNA binding proteins, it binds directly to 16S rRNA where it nucleates assembly of the body of the 30S subunit. Functionally, with S5 and S12 plays an important role in translational accuracy. The chain is Small ribosomal subunit protein uS4 from Koribacter versatilis (strain Ellin345).